A 416-amino-acid chain; its full sequence is Glutamyl-tRNA reductase (416 aa).

Substrate is bound by residues Thr-49–Arg-52, Ser-105, Glu-110–Gln-112, and Gln-116. Cys-50 serves as the catalytic Nucleophile. Residue Gly-185–Ile-190 participates in NADP(+) binding.

The protein belongs to the glutamyl-tRNA reductase family. Homodimer.

It carries out the reaction (S)-4-amino-5-oxopentanoate + tRNA(Glu) + NADP(+) = L-glutamyl-tRNA(Glu) + NADPH + H(+). It participates in porphyrin-containing compound metabolism; protoporphyrin-IX biosynthesis; 5-aminolevulinate from L-glutamyl-tRNA(Glu): step 1/2. Functionally, catalyzes the NADPH-dependent reduction of glutamyl-tRNA(Glu) to glutamate 1-semialdehyde (GSA). The sequence is that of Glutamyl-tRNA reductase from Shewanella loihica (strain ATCC BAA-1088 / PV-4).